The following is a 265-amino-acid chain: tRNA (guanine-N(1)-)-methyltransferase (265 aa).

Residues Gly-119 and 139–144 (IGDYVL) contribute to the S-adenosyl-L-methionine site.

The protein belongs to the RNA methyltransferase TrmD family. As to quaternary structure, homodimer.

Its subcellular location is the cytoplasm. It carries out the reaction guanosine(37) in tRNA + S-adenosyl-L-methionine = N(1)-methylguanosine(37) in tRNA + S-adenosyl-L-homocysteine + H(+). In terms of biological role, specifically methylates guanosine-37 in various tRNAs. This Alcanivorax borkumensis (strain ATCC 700651 / DSM 11573 / NCIMB 13689 / SK2) protein is tRNA (guanine-N(1)-)-methyltransferase.